The sequence spans 66 residues: Large ribosomal subunit protein bL31 (66 aa).

The Zn(2+) site is built by Cys16, Cys18, Cys36, and Cys39.

It belongs to the bacterial ribosomal protein bL31 family. Type A subfamily. As to quaternary structure, part of the 50S ribosomal subunit. Zn(2+) is required as a cofactor.

Binds the 23S rRNA. The polypeptide is Large ribosomal subunit protein bL31 (Thermodesulfovibrio yellowstonii (strain ATCC 51303 / DSM 11347 / YP87)).